The following is a 142-amino-acid chain: Hemoglobin subunit zeta (142 aa).

Ser2 is modified (N-acetylserine). Positions 2–142 constitute a Globin domain; sequence SLTKAERTMV…VSSVLTEKYR (141 aa). A Phosphoserine modification is found at Ser53. His59 provides a ligand contact to heme b. Ser73 carries the phosphoserine modification. His88 provides a ligand contact to heme b.

Belongs to the globin family. In terms of assembly, heterotetramer of two zeta chains and beta-type chains.

The zeta chain is an alpha-type chain of mammalian embryonic hemoglobin. The protein is Hemoglobin subunit zeta (HBZ1) of Equus caballus (Horse).